Consider the following 236-residue polypeptide: Dual specificity protein phosphatase 15 (236 aa).

A lipid anchor (N-myristoyl glycine) is attached at Gly2. A Tyrosine-protein phosphatase domain is found at 4–144; sequence GMTKVLPGLY…LEEFGWANSQ (141 aa). Catalysis depends on Cys88, which acts as the Phosphocysteine intermediate. Residues 178–213 form a disordered region; it reads GPGTSAPSATTASSAASEGTLQRLVPRSPRESHRPL. Residues 181–194 are compositionally biased toward low complexity; the sequence is TSAPSATTASSAAS.

Belongs to the protein-tyrosine phosphatase family. Non-receptor class dual specificity subfamily.

The protein resides in the cell membrane. The enzyme catalyses O-phospho-L-tyrosyl-[protein] + H2O = L-tyrosyl-[protein] + phosphate. It carries out the reaction O-phospho-L-seryl-[protein] + H2O = L-seryl-[protein] + phosphate. It catalyses the reaction O-phospho-L-threonyl-[protein] + H2O = L-threonyl-[protein] + phosphate. In terms of biological role, may play a role in the regulation of oligodendrocyte differentiation. May play a role in the regulation of myelin formation. Involved in the regulation of Erk1/2 phosphorylation in Schwann cells; the signaling may be linked to the regulation of myelination. May dephosphorylate MAPK13, ATF2, ERBB3, PDGFRB and SNX6. The protein is Dual specificity protein phosphatase 15 (Dusp15) of Rattus norvegicus (Rat).